Consider the following 589-residue polypeptide: Ubiquilin-1 (589 aa).

Residues 1–11 show a composition bias toward gly residues; sequence MAESGESGGPP. Disordered stretches follow at residues 1–35 and 110–145; these read MAESGESGGPPGSQDSAAGAEGAGAPAAAASAEPK and NRPQDHSAQQTNTAGSNVTTSSTPNSNSTSGSATSN. Residue alanine 2 is modified to N-acetylalanine. The segment covering 12–35 has biased composition (low complexity); sequence GSQDSAAGAEGAGAPAAAASAEPK. In terms of domain architecture, Ubiquitin-like spans 37–111; that stretch reads MKVTVKTPKE…VHLVIKTQNR (75 aa). The segment covering 110-124 has biased composition (polar residues); the sequence is NRPQDHSAQQTNTAG. Over residues 125 to 145 the composition is skewed to low complexity; the sequence is SNVTTSSTPNSNSTSGSATSN. The tract at residues 178-428 is interaction with UBXN4; the sequence is QLLSNPEMMV…LNNPLFAGNP (251 aa). 2 consecutive STI1 domains span residues 182-210 and 212-251; these read NPEMMVQIMENPFVQSMLSNPDLMRQLIM and NPQMQQLIQRNPEISHMLNNPDIMRQTLELARNPAMMQEM. A disordered region spans residues 295–371; the sequence is PFASLVSNTS…NLVPGVGASM (77 aa). The segment covering 299–313 has biased composition (polar residues); that stretch reads LVSNTSSGEGSQPSR. Low complexity predominate over residues 327-360; sequence QTSQSSSASSGTASTVGGTTGSTASGTSGQSTTA. STI1 domains lie at 387-434 and 438-470; these read NPQL…QEQM and LPTFLQQMQNPDTLSAMSNPRAMQALLQIQQGL. Positions 488–520 are disordered; sequence LGALGSTGGSSGTNGSNATPSENTSPTAGTTEP. A compositionally biased stretch (gly residues) spans 489–499; the sequence is GALGSTGGSSG. The span at 509-520 shows a compositional bias: polar residues; the sequence is ENTSPTAGTTEP. One can recognise a UBA domain in the interval 546–586; that stretch reads RFQQQLEQPSAMGFLNREANLQALIATGGDINAAIERLLGS.

Monomer and homodimer. Heterodimer with UBQLN2. Binds CD47, NBL1, GABRA1, GABRA2, GABRA3, GABRA6, GABRB1, GABRB2 and GABRB3. Binds UBE3A, BTRC, P4HB and MTOR. Interacts with the proteasome 19S subunit. Interacts (via ubiquitin-like domain) with TREX1; the interaction is direct and may control TREX1 subcellular location. Forms a complex with UBXN4 and VCP. Interacts (via UBA domain) with UBQLN4 (via ubiquitin-like domain). Found in a complex with UBQLN2 and MAP1LC3A/B/C. The monomeric form interacts with PSEN1 and PSEN2. Interacts with ORAI1. Interacts (via UBA domain) with TICAM1. Interacts with EPS15. Interacts (via UBA domain) with UBA52 and (via ubiquitin-like domain) with PSMD3 and PSMD4. Interacts with HERPUD1. Interacts with MAP1LC3A/B/C in the presence of UBQLN4. Interacts (via ubiquitin-like domain) with EPS15 (via UIM domains) and both the ubiquitinated and non-ubiquitinated forms can interact with EPS15. Interacts (via ubiquitin-like domain) with EPS15L1, HGS (via UIM domain) and STAM2 (via UIM domain). Interacts with BCL2L10/BCL-B; in the cytoplasm. Degraded during both macroautophagy and during chaperone-mediated autophagy (CMA). Post-translationally, phosphorylated. In terms of processing, ubiquitinated.

Its subcellular location is the nucleus. It localises to the cytoplasm. The protein localises to the endoplasmic reticulum. It is found in the cytoplasmic vesicle. The protein resides in the autophagosome. Its subcellular location is the cell membrane. Its function is as follows. Plays an important role in the regulation of different protein degradation mechanisms and pathways including ubiquitin-proteasome system (UPS), autophagy and endoplasmic reticulum-associated protein degradation (ERAD) pathway. Mediates the proteasomal targeting of misfolded or accumulated proteins for degradation by binding (via UBA domain) to their polyubiquitin chains and by interacting (via ubiquitin-like domain) with the subunits of the proteasome. Plays a role in the ERAD pathway via its interaction with ER-localized proteins UBXN4, VCP and HERPUD1 and may form a link between the polyubiquitinated ERAD substrates and the proteasome. Plays a role in unfolded protein response (UPR) by attenuating the induction of UPR-inducible genes, DDTI3/CHOP, HSPA5 and PDIA2 during ER stress. Involved in the regulation of macroautophagy and autophagosome formation; required for maturation of autophagy-related protein LC3 from the cytosolic form LC3-I to the membrane-bound form LC3-II and may assist in the maturation of autophagosomes to autolysosomes by mediating autophagosome-lysosome fusion. Negatively regulates the TICAM1/TRIF-dependent toll-like receptor signaling pathway by decreasing the abundance of TICAM1 via the autophagic pathway. Promotes the ubiquitination and lysosomal degradation of ORAI1, consequently down-regulating the ORAI1-mediated Ca2+ mobilization. Suppresses the maturation and proteasomal degradation of amyloid beta A4 protein (A4) by stimulating the lysine 63 (K63)-linked polyubiquitination. Delays the maturation of A4 by sequestering it in the Golgi apparatus and preventing its transport to the cell surface for subsequent processing. Ubiquitinates BCL2L10 and thereby stabilizes protein abundance. This chain is Ubiquilin-1 (UBQLN1), found in Pongo abelii (Sumatran orangutan).